We begin with the raw amino-acid sequence, 322 residues long: Mas-related G-protein coupled receptor member X1 (322 aa).

Topologically, residues 1–30 (MDPTISSHDTESTPLNETGHPNCTPILTLS) are extracellular. Residue asparagine 16 is glycosylated (N-linked (GlcNAc...) asparagine). A helical membrane pass occupies residues 31 to 51 (FLVLITTLVGLAGNTIVLWLL). At 52–59 (GFRMRRKA) the chain is on the cytoplasmic side. Residues 60–80 (ISVYILNLALADSFFLCCHFI) traverse the membrane as a helical segment. Topologically, residues 81-100 (DSLLRIIDFYGLYAHKLSKD) are extracellular. The chain crosses the membrane as a helical span at residues 101–121 (ILGNAAIIPYISGLSILSAIS). The Cytoplasmic segment spans residues 122 to 142 (TERCLCVLWPIWYHCHRPRNM). A helical membrane pass occupies residues 143-163 (SAIICALIWVLSFLMGILDWF). The Extracellular portion of the chain corresponds to 164-179 (SGFLGETHHHLWKNVD). Residues 180-200 (FIITAFLIFLFMLLSGSSLAL) form a helical membrane-spanning segment. At 201–223 (LLRILCGPRRKPLSRLYVTIALT) the chain is on the cytoplasmic side. A helical membrane pass occupies residues 224–244 (VMVYLICGLPLGLYLFLLYWF). Over 245 to 257 (GVHLHYPFCHIYQ) the chain is Extracellular. Residues 258–278 (VTAVLSCVNSSANPIIYFLVG) form a helical membrane-spanning segment. Residues 279-322 (SFRQHRKHRSLKRVLKRALEDTPEEDEYTDSHLHKTTEISESRY) are Cytoplasmic-facing.

This sequence belongs to the G-protein coupled receptor 1 family. Mas subfamily. As to expression, expressed in a subset of IB4-positive small diameter nociceptive dorsal root neurons.

Its subcellular location is the cell membrane. In terms of biological role, orphan receptor activated by neuropeptides terminating in Arg-Phe or Arg-Phe-amide. Mediates its action by association with G proteins that activate a phosphatidylinositol-calcium second messenger system. Its effect is mediated by G(q) and G(11) proteins. May regulate the function of nociceptive neurons by modulation of pain perception. The polypeptide is Mas-related G-protein coupled receptor member X1 (Mus musculus (Mouse)).